Here is a 294-residue protein sequence, read N- to C-terminus: ATP phosphoribosyltransferase (294 aa).

It belongs to the ATP phosphoribosyltransferase family. Long subfamily. Mg(2+) serves as cofactor.

It is found in the cytoplasm. The catalysed reaction is 1-(5-phospho-beta-D-ribosyl)-ATP + diphosphate = 5-phospho-alpha-D-ribose 1-diphosphate + ATP. Its pathway is amino-acid biosynthesis; L-histidine biosynthesis; L-histidine from 5-phospho-alpha-D-ribose 1-diphosphate: step 1/9. With respect to regulation, feedback inhibited by histidine. Its function is as follows. Catalyzes the condensation of ATP and 5-phosphoribose 1-diphosphate to form N'-(5'-phosphoribosyl)-ATP (PR-ATP). Has a crucial role in the pathway because the rate of histidine biosynthesis seems to be controlled primarily by regulation of HisG enzymatic activity. The chain is ATP phosphoribosyltransferase from Chlorobium luteolum (strain DSM 273 / BCRC 81028 / 2530) (Pelodictyon luteolum).